Reading from the N-terminus, the 138-residue chain is MLSPQKTKFRKQHRGRMKGVSHRRGNHICFGRFALQALEPAWITSGQIEAGRRAITRYARRGGKIWVRIFPDKPITMRPAETRMGSGKGSPEYWVSVIRPYRILYEMGGVSETVARAATEIAAYKMPIRTRFVTASPV.

The disordered stretch occupies residues 1–21; that stretch reads MLSPQKTKFRKQHRGRMKGVS. Over residues 7-21 the composition is skewed to basic residues; sequence TKFRKQHRGRMKGVS.

It belongs to the universal ribosomal protein uL16 family. As to quaternary structure, part of the 50S ribosomal subunit.

Its subcellular location is the plastid. The protein resides in the chloroplast. In Cycas taitungensis (Prince sago), this protein is Large ribosomal subunit protein uL16c.